We begin with the raw amino-acid sequence, 224 residues long: UPF0758 protein lin1584 (224 aa).

In terms of domain architecture, MPN spans 102 to 224 (VIRCPEDAVK…YISLKEKGYF (123 aa)). Zn(2+)-binding residues include histidine 173, histidine 175, and aspartate 186. The short motif at 173 to 186 (HNHPSGDPAPSSED) is the JAMM motif element.

The protein belongs to the UPF0758 family.

The chain is UPF0758 protein lin1584 from Listeria innocua serovar 6a (strain ATCC BAA-680 / CLIP 11262).